A 409-amino-acid polypeptide reads, in one-letter code: Serine/threonine transporter SstT (409 aa).

8 helical membrane-spanning segments follow: residues 24 to 44, 48 to 68, 82 to 102, 142 to 162, 194 to 214, 218 to 238, 292 to 312, and 319 to 339; these read LALG…AGLF, FVGA…AATI, IIVL…IAGM, AIAN…GAAL, LGIF…ALAG, LLAV…PAIV, IPLG…VLAM, and GITV…VSAC.

Belongs to the dicarboxylate/amino acid:cation symporter (DAACS) (TC 2.A.23) family.

The protein resides in the cell inner membrane. The enzyme catalyses L-serine(in) + Na(+)(in) = L-serine(out) + Na(+)(out). It carries out the reaction L-threonine(in) + Na(+)(in) = L-threonine(out) + Na(+)(out). Its function is as follows. Involved in the import of serine and threonine into the cell, with the concomitant import of sodium (symport system). The protein is Serine/threonine transporter SstT of Neisseria meningitidis serogroup B (strain ATCC BAA-335 / MC58).